The following is a 22-amino-acid chain: Melittin-like peptide (22 aa).

The residue at position 22 (Gln22) is a Glutamine amide.

Expressed by the skin dorsal glands.

It localises to the secreted. The protein is Melittin-like peptide of Rana temporaria (European common frog).